Here is a 782-residue protein sequence, read N- to C-terminus: Beta-mannosyltransferase 9 (782 aa).

Topologically, residues 1–26 are cytoplasmic; the sequence is MEKLIQSTISLFISLSLKISTKSYKS. The chain crosses the membrane as a helical span at residues 27–47; sequence IISILFIISLLSIILTTTITV. Residues 48-782 lie on the Extracellular side of the membrane; it reads YHDPERIITT…GKDKGKDKSN (735 aa). The interval 66-96 is disordered; the sequence is KSVFTASSPKQQDKLQQEIDQHQSDNSHEQQ. A compositionally biased stretch (basic and acidic residues) spans 76 to 96; it reads QQDKLQQEIDQHQSDNSHEQQ. 3 N-linked (GlcNAc...) asparagine glycosylation sites follow: Asn-445, Asn-648, and Asn-699.

This sequence belongs to the BMT family.

The protein resides in the membrane. Functionally, beta-mannosyltransferase involved in cell wall biosynthesis through beta-1,2-mannosylation of cell wall phosphopeptidomannan. The chain is Beta-mannosyltransferase 9 (BMT9) from Candida albicans (strain SC5314 / ATCC MYA-2876) (Yeast).